The chain runs to 1342 residues: ATP-dependent RNA helicase TDRD9 (1342 aa).

The span at 31 to 63 shows a compositional bias: basic and acidic residues; the sequence is KAEAEDNATEVRSDKAFSELSSPEKEKSDDGNQ. The disordered stretch occupies residues 31-81; sequence KAEAEDNATEVRSDKAFSELSSPEKEKSDDGNQRRKRAQLPTGPGTSPPSL. The Helicase ATP-binding domain maps to 99–265; sequence VSLIENNSVV…FGSPIRNQMN (167 aa). 112-119 contacts ATP; sequence GATGSGKT. A DEAH box motif is present at residues 211–214; it reads DEVH. One can recognise a Helicase C-terminal domain in the interval 317-503; the sequence is SLIQSFDEME…LLKVKLLDMG (187 aa). The region spanning 901–962 is the Tudor domain; sequence SLYPNLLCVA…RELPSDLMTP (62 aa).

The protein belongs to the DEAD box helicase family. DEAH subfamily.

It localises to the cytoplasm. Its subcellular location is the nucleus. It catalyses the reaction ATP + H2O = ADP + phosphate + H(+). In terms of biological role, ATP-binding RNA helicase which plays a central role during spermatogenesis by repressing transposable elements and preventing their mobilization, which is essential for the germline integrity. Acts via the piRNA metabolic process, which mediates the repression of transposable elements during meiosis by forming complexes composed of piRNAs and Piwi proteins and governs the methylation and subsequent repression of transposons. Acts downstream of piRNA biogenesis: exclusively required for transposon silencing in the nucleus, suggesting that it acts as a nuclear effector in the nucleus together with piwil4. In Danio rerio (Zebrafish), this protein is ATP-dependent RNA helicase TDRD9.